Here is a 205-residue protein sequence, read N- to C-terminus: Ribosome maturation factor RimP (205 aa).

Belongs to the RimP family.

It is found in the cytoplasm. Functionally, required for maturation of 30S ribosomal subunits. In Sinorhizobium medicae (strain WSM419) (Ensifer medicae), this protein is Ribosome maturation factor RimP.